We begin with the raw amino-acid sequence, 457 residues long: UDP-N-acetylmuramate--L-alanine ligase (457 aa).

109 to 115 (GTDGKTT) is an ATP binding site.

The protein belongs to the MurCDEF family.

It localises to the cytoplasm. The catalysed reaction is UDP-N-acetyl-alpha-D-muramate + L-alanine + ATP = UDP-N-acetyl-alpha-D-muramoyl-L-alanine + ADP + phosphate + H(+). It functions in the pathway cell wall biogenesis; peptidoglycan biosynthesis. Functionally, cell wall formation. This Thermotoga sp. (strain RQ2) protein is UDP-N-acetylmuramate--L-alanine ligase.